A 127-amino-acid chain; its full sequence is Protein ApaG (127 aa).

In terms of domain architecture, ApaG spans 3–127 (DDPRYRVEVE…FVLSVPRTLH (125 aa)).

The chain is Protein ApaG from Xanthomonas campestris pv. campestris (strain 8004).